Consider the following 518-residue polypeptide: MVFSSNVFLFMFLPIFLGLYYLSGQRYRNLLLLIASYIFYAWWRVDFLALFIGVTVWNYWIGLKVGAAGVRTKPAQRWLLLGVIVDLCILGYFKYANFGVDSINAAMTSMGLEPFILTHVLLPIGISFYVFESISYIIDVYRGDTPATRNLIDFAAFVAIFPHLIAGPVLRFRDLADQFNNRTHTLDKFSEGATRFMQGFIKKVFIADTLAIVADHCFALQNPTTGDAWLGALAYTAQLYFDFSGYSDMAIGLGLMMGFRFMENFKQPYISQSITEFWRRWHISLSTWLRDYLYITLGGNRGGKVATYRNLFLTMLLGGLWHGANVTYIIWGAWHGMWLAIEKAVGINTKPYSFNVIRWALTFLLVVIGWVIFRSENLHVAGRMYGAMFSFGDWQLSELNRASLTGLQVATLVVAYATLAFFGLRDFYQNREKDSGKSARADGPATEQPGTIKAVPGDAPGSLHLPGYTVGSEAQVQPAYWVADWPRYAMRALILLLFVASILKLSAQSFSPFLYFQF.

Transmembrane regions (helical) follow at residues 2–24 (VFSS…YLSG), 39–61 (FYAW…NYWI), 78–100 (WLLL…NFGV), 115–137 (FILT…ISYI), 150–172 (NLID…VLRF), 319–341 (GLWH…WLAI), 354–373 (FNVI…WVIF), and 402–424 (ASLT…FFGL). The active site involves histidine 322. The segment at 435-456 (SGKSARADGPATEQPGTIKAVP) is disordered. The chain crosses the membrane as a helical span at residues 493–515 (LILLLFVASILKLSAQSFSPFLY).

This sequence belongs to the membrane-bound acyltransferase family.

It localises to the cell inner membrane. It functions in the pathway glycan biosynthesis; alginate biosynthesis. Its function is as follows. Together with AlgJ and AlgF, forms an inner membrane complex which probably interacts with the alginate polymerization-transport complex and adds acetyl groups at the O-2 and O-3 positions of mannuronate residues. Acetylation of alginate is important for the architecture of biofilms and increases the ability of alginate to act as a defense barrier. The sequence is that of Probable alginate O-acetylase AlgI (algI) from Pseudomonas syringae pv. tomato (strain ATCC BAA-871 / DC3000).